We begin with the raw amino-acid sequence, 162 residues long: 3-dehydroquinate dehydratase (162 aa).

Tyr22 serves as the catalytic Proton acceptor. The substrate site is built by Asn73, His79, and Asp86. His99 serves as the catalytic Proton donor. Residues 100–101 (LS) and Arg110 each bind substrate.

It belongs to the type-II 3-dehydroquinase family. In terms of assembly, homododecamer.

It catalyses the reaction 3-dehydroquinate = 3-dehydroshikimate + H2O. The protein operates within metabolic intermediate biosynthesis; chorismate biosynthesis; chorismate from D-erythrose 4-phosphate and phosphoenolpyruvate: step 3/7. Its function is as follows. Catalyzes a trans-dehydration via an enolate intermediate. The protein is 3-dehydroquinate dehydratase of Sulfurovum sp. (strain NBC37-1).